A 235-amino-acid polypeptide reads, in one-letter code: Small ribosomal subunit protein uS2c (235 aa).

This sequence belongs to the universal ribosomal protein uS2 family.

The protein resides in the plastid. This Euglena longa (Euglenophycean alga) protein is Small ribosomal subunit protein uS2c (rps2).